Reading from the N-terminus, the 414-residue chain is Gamma-glutamyl phosphate reductase (414 aa).

The protein belongs to the gamma-glutamyl phosphate reductase family.

It is found in the cytoplasm. It catalyses the reaction L-glutamate 5-semialdehyde + phosphate + NADP(+) = L-glutamyl 5-phosphate + NADPH + H(+). It participates in amino-acid biosynthesis; L-proline biosynthesis; L-glutamate 5-semialdehyde from L-glutamate: step 2/2. Its function is as follows. Catalyzes the NADPH-dependent reduction of L-glutamate 5-phosphate into L-glutamate 5-semialdehyde and phosphate. The product spontaneously undergoes cyclization to form 1-pyrroline-5-carboxylate. This Kosmotoga olearia (strain ATCC BAA-1733 / DSM 21960 / TBF 19.5.1) protein is Gamma-glutamyl phosphate reductase.